The following is a 669-amino-acid chain: Cell surface receptor daf-1 (669 aa).

The signal sequence occupies residues 1–19 (MRIRHVVFCLLALVYGAET). Residues 20-170 (SDDDLDERTN…APGPQQSSTW (151 aa)) are Extracellular-facing. Residues asparagine 49, asparagine 79, asparagine 133, and asparagine 154 are each glycosylated (N-linked (GlcNAc...) asparagine). A helical membrane pass occupies residues 171-191 (LILTILALLTFIVLLGIAIFL). Topologically, residues 192 to 669 (TRKSWEAKFD…NDDSSRPLLG (478 aa)) are cytoplasmic. One can recognise a GS domain in the interval 262 to 292 (NNMKDMLDVLEETSGSGMGPTTLHKLTIGGQ). A Protein kinase domain is found at 293–593 (IRLTGRVGSG…KRMDERQQLL (301 aa)). ATP contacts are provided by residues 299–307 (VGSGRFGNV) and lysine 320. The Proton acceptor role is filled by aspartate 423. Basic and acidic residues-rich tracts occupy residues 611-624 (DRKILGPQKPKDES) and 633-650 (VQKEIDREDEQENWRETA). Residues 611-669 (DRKILGPQKPKDESPANGAPRIVQKEIDREDEQENWRETAKTPNGHISSNDDSSRPLLG) form a disordered region. Positions 651 to 661 (KTPNGHISSND) are enriched in polar residues.

This sequence belongs to the protein kinase superfamily. TKL Ser/Thr protein kinase family. TGFB receptor subfamily. In terms of assembly, may interact with daf-4 to regulate dauer larva development. As to expression, head and ventral nerve cord from embryos to adults. Expressed in many sensory neurons. Subset of head neurons show coexpression with daf-4 when dauer/nondauer decision is made. Also expressed in non-neuronal cells: membraneous sheath surrounding the distal end of the intestine and in the distal tip cell of the gonad.

Its subcellular location is the membrane. The catalysed reaction is L-threonyl-[receptor-protein] + ATP = O-phospho-L-threonyl-[receptor-protein] + ADP + H(+). It carries out the reaction L-seryl-[receptor-protein] + ATP = O-phospho-L-seryl-[receptor-protein] + ADP + H(+). Functionally, probably involved in a TGF-beta pathway. May be a receptor for TGF-beta-like ligand daf-7. Controls the decision of whether or not larvae enter a developmentally arrested state, known as dauer, in response to environmental conditions. Involved in regulating entry into quiescence triggered by satiety. Involved in sensitivity to CO2 levels. In AWC neurons, acts to promote expression of srsx-3, a member of the GPCR family. This Caenorhabditis elegans protein is Cell surface receptor daf-1 (daf-1).